The following is a 425-amino-acid chain: Serine--tRNA ligase (425 aa).

227–229 contacts L-serine; sequence TAE. Residues 258–260 and Val-274 contribute to the ATP site; that span reads RRE. Position 281 (Glu-281) interacts with L-serine. 347–350 serves as a coordination point for ATP; that stretch reads ETHS. Thr-382 lines the L-serine pocket.

It belongs to the class-II aminoacyl-tRNA synthetase family. Type-1 seryl-tRNA synthetase subfamily. In terms of assembly, homodimer. The tRNA molecule binds across the dimer.

The protein localises to the cytoplasm. The enzyme catalyses tRNA(Ser) + L-serine + ATP = L-seryl-tRNA(Ser) + AMP + diphosphate + H(+). It carries out the reaction tRNA(Sec) + L-serine + ATP = L-seryl-tRNA(Sec) + AMP + diphosphate + H(+). The protein operates within aminoacyl-tRNA biosynthesis; selenocysteinyl-tRNA(Sec) biosynthesis; L-seryl-tRNA(Sec) from L-serine and tRNA(Sec): step 1/1. Functionally, catalyzes the attachment of serine to tRNA(Ser). Is also able to aminoacylate tRNA(Sec) with serine, to form the misacylated tRNA L-seryl-tRNA(Sec), which will be further converted into selenocysteinyl-tRNA(Sec). This Deinococcus radiodurans (strain ATCC 13939 / DSM 20539 / JCM 16871 / CCUG 27074 / LMG 4051 / NBRC 15346 / NCIMB 9279 / VKM B-1422 / R1) protein is Serine--tRNA ligase.